The primary structure comprises 504 residues: Maturase K (504 aa).

The protein belongs to the intron maturase 2 family. MatK subfamily.

The protein localises to the plastid. It localises to the chloroplast. Functionally, usually encoded in the trnK tRNA gene intron. Probably assists in splicing its own and other chloroplast group II introns. This Arabidopsis halleri protein is Maturase K.